The following is an 879-amino-acid chain: MATVGEYDVDGEFPCYTYEYSKGFTKLMYLIITEKNNPNGHKNIVSYLSDKKNVKSINQKNKKGYTALSIAVRNCGNWCSYKTVRILLEKGAKTNIKNNEGITPLIFASFNSRFCEGFNVINLLLKYGADINARDNNGYTALMNASSNSNSSSTYTTVKLLLDNDANIDDKDKNGLTCLMHACNNVTLKSSIGTIELLLYYGADINAVDNNGRTALMHACDNSNNIELIELLLNRGADIEAVDYKGLTCLMIASKYAGSINSVEVVEILINRGANIEARNEKLRTPLMYACKYSHNNTSVIKLLLDKGANIETTDLRNNTALILASTYSSSVEPIKLLLDKGANINHTNDEGCNALNLACINSSYNNNSEIVKLLIDRGSNINNMDSERTILTSTCEFIGKGSNIDTVKILLDNNADPNIPNTNGNTTLLYMCKKYIKDGPKKRDLNFNVIKLLLDYKANPNFINKKNENSLTRLSKYSDKVDIEIIKLLLDYGVDINSTNNYCNSALLLFCMDLQNSCTKISYNCKNIVKLLLEKGADVNIINSNGNTALSIICESDDNNLSDIIELLLAHNANPNTINKEEYTPLMHLIERFDYFLTNSKSIPQNIESDSDSDSMSGFESYRGFSQSSKSVNKYNLDKIEKNKNEPEINYRQKNLEMLLKHKTTKINFQNSSGITALLHECQVSDNIEPIKLLLDNGADPNIQDEKGETALHKAVRHTNKIDVIKLLMDYHANPYIFRNKGQDLLSYAFKKSSRRNFVNIAKNLINNPCHVLSDENRSQIFESKDKENIISIIKMLEYNAKIKAKFDVTIDLMPQIATQIIYNHKSLRARLLKLKWLYMCGDIDKIITLENFELFDYLCVENMYQLHDKIIGISDHI.

ANK repeat units follow at residues 22–62 (KGFT…QKNK), 63–96 (KGYTALSIAVRNCGNWCSYKTVRILLEKGAKTNI), 100–133 (EGITPLIFASFNSRFCEGFNVINLLLKYGADINA), 137–170 (NGYTALMNASSNSNSSSTYTTVKLLLDNDANIDD), 174–207 (NGLTCLMHACNNVTLKSSIGTIELLLYYGADINA), 211–241 (NGRTALMHACDNSNNIELIELLLNRGADIEA), 245–278 (KGLTCLMIASKYAGSINSVEVVEILINRGANIEA), 282–313 (KLRTPLMYACKYSHNNTSVIKLLLDKGANIET), 317–347 (RNNTALILASTYSSSVEPIKLLLDKGANINH), 351–384 (EGCNALNLACINSSYNNNSEIVKLLIDRGSNINN), 387–420 (SERTILTSTCEFIGKGSNIDTVKILLDNNADPNI), 424–463 (NGNTTLLYMCKKYIKDGPKKRDLNFNVIKLLLDYKANPNF), 470–499 (NSLTRLSKYSDKVDIEIIKLLLDYGVDINS), 506–542 (SALLLFCMDLQNSCTKISYNCKNIVKLLLEKGADVNI), 546–578 (NGNTALSIICESDDNNLSDIIELLLAHNANPNT), 674–704 (SGITALLHECQVSDNIEPIKLLLDNGADPNI), and 708–738 (KGETALHKAVRHTNKIDVIKLLMDYHANPYI).

The polypeptide is Putative ankyrin repeat protein L88 (Acanthamoeba polyphaga mimivirus (APMV)).